The chain runs to 276 residues: uncharacterized protein (276 aa).

The AB hydrolase-1 domain occupies 20–137; sequence PVLIFIPGAN…PPINTFLPDS (118 aa). The interval 57–76 is disordered; that stretch reads GESELTEPLPDSASNPDSDY.

It belongs to the AB hydrolase superfamily.

This is an uncharacterized protein from Staphylococcus aureus (strain USA300).